A 304-amino-acid polypeptide reads, in one-letter code: Aspartate carbamoyltransferase catalytic subunit (304 aa).

Carbamoyl phosphate-binding residues include R56 and T57. K85 contacts L-aspartate. Carbamoyl phosphate-binding residues include R106, H134, and Q137. The L-aspartate site is built by R167 and R226. Carbamoyl phosphate contacts are provided by L265 and P266.

The protein belongs to the aspartate/ornithine carbamoyltransferase superfamily. ATCase family. Heterooligomer of catalytic and regulatory chains.

It catalyses the reaction carbamoyl phosphate + L-aspartate = N-carbamoyl-L-aspartate + phosphate + H(+). It participates in pyrimidine metabolism; UMP biosynthesis via de novo pathway; (S)-dihydroorotate from bicarbonate: step 2/3. Catalyzes the condensation of carbamoyl phosphate and aspartate to form carbamoyl aspartate and inorganic phosphate, the committed step in the de novo pyrimidine nucleotide biosynthesis pathway. This Picrophilus torridus (strain ATCC 700027 / DSM 9790 / JCM 10055 / NBRC 100828 / KAW 2/3) protein is Aspartate carbamoyltransferase catalytic subunit.